The sequence spans 1302 residues: Ubiquitin conjugation factor E4 B (1302 aa).

Met1 is modified (N-acetylmethionine). The tract at residues 1–155 (MEELSADEIR…EPSSGPEVSE (155 aa)) is disordered. Positions 16–33 (RLAGGQTSQPTTPLTSPQ) are enriched in low complexity. Phosphoserine occurs at positions 23 and 31. Residues 51 to 64 (QSLGLNVHNMTPAT) show a composition bias toward polar residues. A compositionally biased stretch (low complexity) spans 76–99 (SQSSEGVSSLSSSPSNSLETQSQS). A phosphoserine mark is found at Ser84, Ser88, Ser90, Ser101, Ser103, Ser105, and Ser124. Residues 134 to 147 (NDRREKRSLSDKEP) show a composition bias toward basic and acidic residues. Ser238 is modified (phosphoserine). The segment covering 299 to 327 (AASQLAVPSTPLSPHSAASGTAAGSQPSS) has biased composition (polar residues). The interval 299–406 (AASQLAVPST…SPSLGASGGA (108 aa)) is disordered. Residues 340–374 (ASSGVSILSSSPSPPALASSPQAVPASSSRQRPSS) are compositionally biased toward low complexity. Ser383 carries the post-translational modification Phosphoserine. A compositionally biased stretch (low complexity) spans 384–400 (PSATSRRPSSLRISPSL). Residues Ser803 and Ser969 each carry the phosphoserine modification. Residues 1057–1077 (NKEQWDQLPRDQQQARQSQLA) form a disordered region. Residues 1066–1077 (RDQQQARQSQLA) are compositionally biased toward low complexity. The 74-residue stretch at 1227–1300 (DAPDEFRDPL…QAWMREKQNS (74 aa)) folds into the U-box domain. Phosphoserine is present on Ser1265.

Belongs to the ubiquitin conjugation factor E4 family. In terms of assembly, interacts with VCP/p97. Interacts with STUB1/CHIP and UNC45B. Post-translationally, proteolytically cleaved by caspases during apoptosis. Cleaved efficiently at Asp-123 by caspase-6 and granzyme B. Cleaved with approximately 10-fold less efficiency at Asp-109 by caspase-3 and caspase-7. Expressed in differentiated myotubes (at protein level). Highest expression in ovary, testis, heart and skeletal muscle. Expression is low in colon, thymus and peripheral blood leukocytes. Almost undetectable in lung and spleen.

It is found in the cytoplasm. The protein localises to the nucleus. The catalysed reaction is S-ubiquitinyl-[E2 ubiquitin-conjugating enzyme]-L-cysteine + [acceptor protein]-L-lysine = [E2 ubiquitin-conjugating enzyme]-L-cysteine + N(6)-ubiquitinyl-[acceptor protein]-L-lysine.. It participates in protein modification; protein ubiquitination. Ubiquitin-protein ligase that probably functions as an E3 ligase in conjunction with specific E1 and E2 ligases. May also function as an E4 ligase mediating the assembly of polyubiquitin chains on substrates ubiquitinated by another E3 ubiquitin ligase. May regulate myosin assembly in striated muscles together with STUB1 and VCP/p97 by targeting myosin chaperone UNC45B for proteasomal degradation. This is Ubiquitin conjugation factor E4 B from Homo sapiens (Human).